The primary structure comprises 144 residues: uncharacterized protein (144 aa).

An N-terminal signal peptide occupies residues 1–16 (MRKFLIVLLLPLLVLA).

This is an uncharacterized protein from Aquifex aeolicus (strain VF5).